The sequence spans 295 residues: MSKIRGLPPAIRDPGPGVELGVENGLLCQLIHSPEFNLFSDSVVFESTFIQVTKQGNWMDAYERSATIILGVTSSVPSLPLPNILLMANVTWPQGPFSTCSTLGAPVITLSRILPLKYVELQIYDRTQRILRVRTVTEKIYYLRLHEKHPQAVFRFWIRLVKILQKGLSITTKDPRIHFTHCLVPKMPNSSTETTPESSRPASSQSSETIMLLAAERAGSSVLDLSNRHRFSEDRYTDTKTDNSSNCKTASPVASLIGMPMRATLIHSLWEQEDSCETLLQAPVASSLGDNFLGP.

The disordered stretch occupies residues 187–206 (MPNSSTETTPESSRPASSQS). The segment covering 190-206 (SSTETTPESSRPASSQS) has biased composition (low complexity). Residues S220, S221, S251, and S255 each carry the phosphoserine modification.

The protein belongs to the GARIN family. Interacts (via N-terminus) with RAB2B (in GTP-bound form).

Its subcellular location is the golgi apparatus. In terms of biological role, RAB2B effector protein required for accurate acrosome formation and normal male fertility. The chain is Golgi-associated RAB2 interactor protein 1A (Garin1a) from Rattus norvegicus (Rat).